The chain runs to 271 residues: Putative F-box protein L165 (271 aa).

Residues 4–49 form the F-box domain; it reads ICELFDDVILEIMNLLSDTDKINFMFCCSRFYYFIDLVYYNDIYDY. The segment at 251 to 271 is disordered; sequence NIPKIVPKNTHYRNSSKKYRY. The segment covering 260–271 has biased composition (basic residues); the sequence is THYRNSSKKYRY.

This Acanthamoeba polyphaga mimivirus (APMV) protein is Putative F-box protein L165.